The sequence spans 539 residues: Protoporphyrinogen oxidase (539 aa).

Residues 18–23 (GGGVSG), 43–44 (ES), Trp51, 70–73 (GPRT), Val300, and 521–523 (PGV) contribute to the FAD site.

It belongs to the protoporphyrinogen/coproporphyrinogen oxidase family. Protoporphyrinogen oxidase subfamily. FAD serves as cofactor.

The protein localises to the mitochondrion inner membrane. It carries out the reaction protoporphyrinogen IX + 3 O2 = protoporphyrin IX + 3 H2O2. It functions in the pathway porphyrin-containing compound metabolism; protoporphyrin-IX biosynthesis; protoporphyrin-IX from protoporphyrinogen-IX: step 1/1. Catalyzes the 6-electron oxidation of protoporphyrinogen-IX to form protoporphyrin-IX. The chain is Protoporphyrinogen oxidase from Saccharomyces cerevisiae (strain ATCC 204508 / S288c) (Baker's yeast).